We begin with the raw amino-acid sequence, 30 residues long: Rothein 3.1 (30 aa).

Position 30 is a leucine amide (Leu-30).

Expressed by the skin dorsal glands.

It is found in the secreted. In terms of biological role, lacks antimicrobial activity. Does not inhibit the formation of NO by neuronal nitric oxide. This chain is Rothein 3.1, found in Litoria rothii (Roth's tree frog).